The sequence spans 199 residues: MSSGKAFIGKPAPDFTATAVMPDGQFKDIKLSDYRGKYVVFFFYPLDFTFVCPTEIIAYSDRADEFKKINCEIIGASVDSHFCHLAWINTPKKQGGLGTMKIPLVSDTKRVIAKDYGVLKEDEGIAYRGLFIIDEKGILRQITINDLPVGRSVDETLRLVQAFQFTDKHGEVCPAGWKPGSDTIKPDVQKSKEYFSKQK.

Residues 6–165 (AFIGKPAPDF…TLRLVQAFQF (160 aa)) form the Thioredoxin domain. The active-site Cysteine sulfenic acid (-SOH) intermediate is the cysteine 52.

The protein belongs to the peroxiredoxin family. AhpC/Prx1 subfamily. In terms of assembly, homodimer; disulfide-linked, upon oxidation. 5 homodimers assemble to form a ring-like decamer. Interacts with GDPD5; forms a mixed-disulfide with GDPD5. Interacts with SESN1 and SESN2. In terms of processing, the enzyme can be inactivated by further oxidation of the cysteine sulfenic acid (C(P)-SOH) to sulphinic acid (C(P)-SO2H) instead of its condensation to a disulfide bond. It can be reactivated by forming a transient disulfide bond with sulfiredoxin SRXN1, which reduces the cysteine sulfinic acid in an ATP- and Mg-dependent manner.

It localises to the cytoplasm. The enzyme catalyses a hydroperoxide + [thioredoxin]-dithiol = an alcohol + [thioredoxin]-disulfide + H2O. Functionally, thiol-specific peroxidase that catalyzes the reduction of hydrogen peroxide and organic hydroperoxides to water and alcohols, respectively. Plays a role in cell protection against oxidative stress by detoxifying peroxides and as sensor of hydrogen peroxide-mediated signaling events. Might participate in the signaling cascades of growth factors and tumor necrosis factor-alpha by regulating the intracellular concentrations of H(2)O(2). Reduces an intramolecular disulfide bond in GDPD5 that gates the ability to GDPD5 to drive postmitotic motor neuron differentiation. The chain is Peroxiredoxin-1 (PRDX1) from Gallus gallus (Chicken).